The following is a 397-amino-acid chain: Riboflavin biosynthesis protein RibBA (397 aa).

The DHBP synthase stretch occupies residues 1-199 (MFHRIEEALE…IEDLIAYRRH (199 aa)). Residues 26-27 (RE), D31, 138-142 (RAGHT), and E162 each bind D-ribulose 5-phosphate. E27 provides a ligand contact to Mg(2+). Position 141 (H141) interacts with Mg(2+). Positions 200-397 (HETLVTREVE…ASKLGHLLNL (198 aa)) are GTP cyclohydrolase II. 250-254 (RVHSE) lines the GTP pocket. 3 residues coordinate Zn(2+): C255, C266, and C268. Residues Q271, 293 to 295 (EGR), and T315 each bind GTP. Catalysis depends on D327, which acts as the Proton acceptor; for GTP cyclohydrolase activity. The active-site Nucleophile; for GTP cyclohydrolase activity is the R329. GTP-binding residues include T350 and K355.

The protein in the N-terminal section; belongs to the DHBP synthase family. It in the C-terminal section; belongs to the GTP cyclohydrolase II family. Requires Mg(2+) as cofactor. The cofactor is Mn(2+). It depends on Zn(2+) as a cofactor.

It catalyses the reaction D-ribulose 5-phosphate = (2S)-2-hydroxy-3-oxobutyl phosphate + formate + H(+). The enzyme catalyses GTP + 4 H2O = 2,5-diamino-6-hydroxy-4-(5-phosphoribosylamino)-pyrimidine + formate + 2 phosphate + 3 H(+). Its pathway is cofactor biosynthesis; riboflavin biosynthesis; 2-hydroxy-3-oxobutyl phosphate from D-ribulose 5-phosphate: step 1/1. The protein operates within cofactor biosynthesis; riboflavin biosynthesis; 5-amino-6-(D-ribitylamino)uracil from GTP: step 1/4. Its function is as follows. Catalyzes the conversion of D-ribulose 5-phosphate to formate and 3,4-dihydroxy-2-butanone 4-phosphate. Functionally, catalyzes the conversion of GTP to 2,5-diamino-6-ribosylamino-4(3H)-pyrimidinone 5'-phosphate (DARP), formate and pyrophosphate. The sequence is that of Riboflavin biosynthesis protein RibBA from Bacillus mycoides (strain KBAB4) (Bacillus weihenstephanensis).